A 57-amino-acid chain; its full sequence is Protein new-glue 4 (57 aa).

The N-terminal stretch at 1 to 16 (MEWKLLLIVLPWLLVC) is a signal peptide.

The protein localises to the secreted. The protein is Protein new-glue 4 (ng4) of Drosophila melanogaster (Fruit fly).